A 364-amino-acid polypeptide reads, in one-letter code: Aminomethyltransferase (364 aa).

The protein belongs to the GcvT family. As to quaternary structure, the glycine cleavage system is composed of four proteins: P, T, L and H.

The enzyme catalyses N(6)-[(R)-S(8)-aminomethyldihydrolipoyl]-L-lysyl-[protein] + (6S)-5,6,7,8-tetrahydrofolate = N(6)-[(R)-dihydrolipoyl]-L-lysyl-[protein] + (6R)-5,10-methylene-5,6,7,8-tetrahydrofolate + NH4(+). Functionally, the glycine cleavage system catalyzes the degradation of glycine. This is Aminomethyltransferase from Salmonella paratyphi C (strain RKS4594).